The following is a 318-amino-acid chain: Protoheme IX farnesyltransferase (318 aa).

Helical transmembrane passes span 37–57 (LVIF…HPVI), 58–78 (AFTA…LNMW), 100–120 (VTAR…VMTM), 122–142 (VLVN…YLVV), 155–175 (IVIG…AVTG), 182–202 (FVLF…LALY), 228–248 (IMLY…LGFA), 251–271 (LYMG…FGIW), and 291–311 (ILYL…GLGG).

It belongs to the UbiA prenyltransferase family. Protoheme IX farnesyltransferase subfamily.

The protein resides in the cell inner membrane. It carries out the reaction heme b + (2E,6E)-farnesyl diphosphate + H2O = Fe(II)-heme o + diphosphate. The protein operates within porphyrin-containing compound metabolism; heme O biosynthesis; heme O from protoheme: step 1/1. Its function is as follows. Converts heme B (protoheme IX) to heme O by substitution of the vinyl group on carbon 2 of heme B porphyrin ring with a hydroxyethyl farnesyl side group. The sequence is that of Protoheme IX farnesyltransferase from Parvibaculum lavamentivorans (strain DS-1 / DSM 13023 / NCIMB 13966).